A 329-amino-acid chain; its full sequence is 4-hydroxythreonine-4-phosphate dehydrogenase (329 aa).

Substrate contacts are provided by H136 and T137. The a divalent metal cation site is built by H166, H211, and H266. Substrate is bound by residues K274, N283, and R292.

It belongs to the PdxA family. As to quaternary structure, homodimer. Requires Zn(2+) as cofactor. The cofactor is Mg(2+). It depends on Co(2+) as a cofactor.

The protein localises to the cytoplasm. It carries out the reaction 4-(phosphooxy)-L-threonine + NAD(+) = 3-amino-2-oxopropyl phosphate + CO2 + NADH. The protein operates within cofactor biosynthesis; pyridoxine 5'-phosphate biosynthesis; pyridoxine 5'-phosphate from D-erythrose 4-phosphate: step 4/5. In terms of biological role, catalyzes the NAD(P)-dependent oxidation of 4-(phosphooxy)-L-threonine (HTP) into 2-amino-3-oxo-4-(phosphooxy)butyric acid which spontaneously decarboxylates to form 3-amino-2-oxopropyl phosphate (AHAP). In Escherichia coli O17:K52:H18 (strain UMN026 / ExPEC), this protein is 4-hydroxythreonine-4-phosphate dehydrogenase.